We begin with the raw amino-acid sequence, 53 residues long: Snake venom serine protease LmrSP-4 (53 aa).

The cysteines at positions 26 and 42 are disulfide-linked. Catalysis depends on histidine 41, which acts as the Charge relay system.

As to quaternary structure, monomer. N-glycosylated. Expressed by the venom gland.

It is found in the secreted. Its activity is regulated as follows. Inhibited by the small molecule serine protease inhibitors phenylmethylsulfonyl fluoride (PMSF) and benzamidine. Snake venom serine protease that has fibrinogenolytic activity. Hydrolyzes the alpha-chain of fibrinogen (FGA), without affecting the beta- and the gamma-chains. Also displays hydrolytic activity towards S-2302 (plasma kallikrein substrate) and S-2251 (substrate for plasmin), but has no hydrolytic activity with S-2238 (thrombin substrate) or S-2222 (factor Xa). The polypeptide is Snake venom serine protease LmrSP-4 (Lachesis muta rhombeata (Bushmaster)).